A 1106-amino-acid polypeptide reads, in one-letter code: Probable LRR receptor-like serine/threonine-protein kinase At1g74360 (1106 aa).

A signal peptide spans 1–34 (MTMVTRVIMTDDDSQSLCFLCFLLFFFITAIAVA). Residues 35 to 736 (GDSLDSDREV…PRTLLLIWIS (702 aa)) are Extracellular-facing. 7 LRR repeats span residues 86–109 (RSRV…NFSA), 110–134 (LTEL…LSRC), 136–156 (NLKH…LPGL), 157–182 (SNLE…LFCN), 184–204 (LVVA…IFNG), 205–226 (CRNL…WTGF), and 227–250 (GRLV…MFRG). Residues Asn-93 and Asn-106 are each glycosylated (N-linked (GlcNAc...) asparagine). N-linked (GlcNAc...) asparagine glycosylation is present at Asn-141. Asn-188 and Asn-193 each carry an N-linked (GlcNAc...) asparagine glycan. N-linked (GlcNAc...) asparagine glycans are attached at residues Asn-242 and Asn-251. LRR repeat units lie at residues 252 to 275 (CTLQ…VSNC), 276 to 299 (QNLN…IGSI), 300 to 323 (SSLK…LLNL), 325 to 346 (NLVF…IFGR), 348 to 371 (TQVK…NILK), 372 to 396 (LPNL…ISQI), 398 to 419 (SLKF…EYGN), 420 to 443 (MPGL…SFGK), 445 to 468 (TSLL…IGNC), 470 to 492 (SLLW…LTRM), 566 to 593 (VRTL…ISQM), 594 to 617 (DRLS…IGQL), 619 to 640 (LAFL…IGNL), 641 to 664 (KCLQ…LNDL), and 666 to 690 (ELSK…QVAT). N-linked (GlcNAc...) asparagine glycosylation is found at Asn-309 and Asn-322. Residues Asn-365, Asn-374, Asn-384, and Asn-408 are each glycosylated (N-linked (GlcNAc...) asparagine). N-linked (GlcNAc...) asparagine glycosylation is found at Asn-454 and Asn-467. N-linked (GlcNAc...) asparagine glycosylation is found at Asn-623, Asn-628, Asn-652, Asn-671, Asn-709, and Asn-713. Residues 737 to 757 (LALALAFIACLVVSGIVLMVV) form a helical membrane-spanning segment. Over 758–1106 (KASREAEIDL…GLSSQGYIEM (349 aa)) the chain is Cytoplasmic. Phosphothreonine occurs at positions 803 and 811. One can recognise a Protein kinase domain in the interval 814–1095 (FSEERVVGRG…VKISGKAELF (282 aa)). ATP-binding positions include 820-828 (VGRGGYGTV) and Lys-842. Asp-941 (proton acceptor) is an active-site residue. Tyr-983 bears the Phosphotyrosine mark. Thr-991 carries the phosphothreonine modification.

This sequence belongs to the protein kinase superfamily. Ser/Thr protein kinase family.

It localises to the mitochondrion membrane. The catalysed reaction is L-seryl-[protein] + ATP = O-phospho-L-seryl-[protein] + ADP + H(+). It catalyses the reaction L-threonyl-[protein] + ATP = O-phospho-L-threonyl-[protein] + ADP + H(+). In Arabidopsis thaliana (Mouse-ear cress), this protein is Probable LRR receptor-like serine/threonine-protein kinase At1g74360.